Consider the following 817-residue polypeptide: Verprolin (817 aa).

Pro residues predominate over residues 1–15 (MAGAPAPPPPPPPPA). Residues 1–752 (MAGAPAPPPP…THTNQPDVDV (752 aa)) are disordered. The WH2 1 domain maps to 30 to 47 (GRDALLGDIRKGMKLKKA). The segment covering 37 to 51 (DIRKGMKLKKAETND) has biased composition (basic and acidic residues). Residues 62 to 79 (VSSASGSSGTVSSKGPSM) show a composition bias toward low complexity. One can recognise a WH2 2 domain in the interval 87 to 106 (MGAPQLGDILAGGIPKLKHI). A glycan (N-linked (GlcNAc...) asparagine) is linked at Asn109. Over residues 119–180 (SAPPIPGAVP…VPSSPAPPLP (62 aa)) the composition is skewed to pro residues. N-linked (GlcNAc...) asparagine glycosylation is present at Asn212. The segment covering 236-245 (PQAPPPPPTP) has biased composition (pro residues). Polar residues predominate over residues 254–265 (IKPTDNAVSPPS). The segment covering 306–335 (SQPPLPSSAPPIPTSHAPPLPPTAPPPPSL) has biased composition (pro residues). Over residues 336–348 (PNVTSAPKKATSA) the composition is skewed to low complexity. N-linked (GlcNAc...) asparagine glycosylation occurs at Asn337. Positions 372–382 (PVPPTLAPPLP) are enriched in pro residues. Asn383 carries an N-linked (GlcNAc...) asparagine glycan. The segment covering 383 to 395 (NTTSVPPNKASSM) has biased composition (low complexity). Pro residues predominate over residues 396 to 407 (PAPPPPPPPPPG). The segment covering 408–422 (AFSTSSALSASSIPL) has biased composition (low complexity). Pro residues predominate over residues 423–432 (APLPPPPPPS). Residues 447–469 (LTTNKPSASSKQSKISSSSSSSA) show a composition bias toward low complexity. Over residues 502 to 516 (DKQEDVIGSSKDDNV) the composition is skewed to basic and acidic residues. Residues 518–534 (PSPISPSINPPKQSSQN) are compositionally biased toward low complexity. At Ser519 the chain carries Phosphoserine. The span at 557–579 (APPPHTDAMAPPLPPSAPPPPIT) shows a compositional bias: pro residues. The span at 588 to 597 (GDDHTNDKSE) shows a compositional bias: basic and acidic residues. Over residues 649–661 (PPSPPVAAAPPLP) the composition is skewed to pro residues. The span at 713 to 737 (MDTGTSNSPSKNLKQRLFSTGGSTL) shows a compositional bias: polar residues. Ser762 carries the phosphoserine modification. N-linked (GlcNAc...) asparagine glycosylation is found at Asn784 and Asn796. The disordered stretch occupies residues 786-806 (SQMPKPRPFQNKTKLYPSGKG).

This sequence belongs to the verprolin family. Post-translationally, N-glycosylated.

The protein resides in the cytoplasm. Its subcellular location is the cytoskeleton. Functionally, involved in cytoskeletal organization and cellular growth. May exert its effects on the cytoskeleton directly, or indirectly via proline-binding proteins (e.g. profilin) or proteins possessing SH3 domains. This Saccharomyces cerevisiae (strain ATCC 204508 / S288c) (Baker's yeast) protein is Verprolin (VRP1).